A 58-amino-acid chain; its full sequence is U-scoloptoxin(14)-Sa1a (58 aa).

Residues 1 to 18 (MNRILGMIFLFCLISCYA) form the signal peptide.

It belongs to the scoloptoxin-14 family. Post-translationally, contains 4 disulfide bonds. As to expression, expressed by the venom gland.

It localises to the secreted. The polypeptide is U-scoloptoxin(14)-Sa1a (Scolopendra alternans (Florida Keys giant centipede)).